We begin with the raw amino-acid sequence, 502 residues long: NAD(P)H-quinone oxidoreductase chain 4, chloroplastic (502 aa).

The next 14 membrane-spanning stretches (helical) occupy residues 4–24 (FPWLTILVVLPIFAGSLIFFL), 37–57 (ISICLLEFLLMTYAFCYHFQL), 87–107 (LGSILLTGFITTLATLAAWPV), 113–130 (LFYFLMLAMYSGQIGLFS), 134–154 (LLLFFIMWELELIPVYLLLSM), 167–187 (FILYTAGGSIFFLIGVLGMGL), 213–233 (ILLYFGFLIAYAVKLPIIPLH), 244–264 (HYSTCMLLAGILLKMGAYGLI), 274–294 (AHYLFSPWLVIIGAIQIIYAA), 315–335 (MGFIIIGIGSITNIGLNGAIL), 336–356 (QILSHGFIGATLFFLAGTASD), 388–408 (LALPGMSGFVAELVVFFGLIT), 419–439 (LITFVMAIGMILTPIYLLSML), and 464–484 (LFILICIFLPVIGIGIYPDFV).

This sequence belongs to the complex I subunit 4 family.

Its subcellular location is the plastid. It is found in the chloroplast thylakoid membrane. It catalyses the reaction a plastoquinone + NADH + (n+1) H(+)(in) = a plastoquinol + NAD(+) + n H(+)(out). The enzyme catalyses a plastoquinone + NADPH + (n+1) H(+)(in) = a plastoquinol + NADP(+) + n H(+)(out). The chain is NAD(P)H-quinone oxidoreductase chain 4, chloroplastic from Lolium perenne (Perennial ryegrass).